The primary structure comprises 411 residues: Probable G-protein coupled receptor AH9.1 (411 aa).

Topologically, residues 1 to 18 are cytoplasmic; the sequence is MLLFLLRRIFDCRYKYKL. The chain crosses the membrane as a helical span at residues 19 to 39; it reads FVKALVLFLTIVYNAGLVHFF. The Extracellular segment spans residues 40 to 55; it reads FRTTSLDDSPEMNHVD. The helical transmembrane segment at 56 to 76 threads the bilayer; that stretch reads YVAHVIVMPIVLSIGMINQCL. Residues 77-87 lie on the Cytoplasmic side of the membrane; sequence NVCTLLHIRTS. The helical transmembrane segment at 88–108 threads the bilayer; the sequence is IFLYLKASAIADILSIVAFIP. Topologically, residues 109–131 are extracellular; it reads FLFRHAKLIDPSWELGMFYHAHL. The helical transmembrane segment at 132 to 152 threads the bilayer; it reads ELPLINALISASALNIVAMTV. Residues 153 to 176 are Cytoplasmic-facing; that stretch reads DRYVSVCHPIKFFQNNETKPSRRR. Residues 177–197 form a helical membrane-spanning segment; sequence TMLIIVMIYFIALMIYFPSVF. Residues 198 to 229 lie on the Extracellular side of the membrane; the sequence is QKKLGVVTDALTNKTIYTIVRNEDVEALQVFK. The N-linked (GlcNAc...) asparagine glycan is linked to asparagine 210. Residues 230-250 traverse the membrane as a helical segment; the sequence is FYLIVRECICRWGPVLLLVIL. Residues 251 to 299 lie on the Cytoplasmic side of the membrane; that stretch reads NMCVVRGLRKIDKRNWFWRQPSQNSRTETLAQRQLRSPRDDRSRISVLL. Residues 300-320 form a helical membrane-spanning segment; sequence FVTSATFIICNIPASVISFFV. Topologically, residues 321 to 333 are extracellular; it reads RRVSGSLFWQIFR. The chain crosses the membrane as a helical span at residues 334–354; the sequence is AIANLLQVTSYLYNFYLYALC. The Cytoplasmic segment spans residues 355 to 411; sequence SSEYRHAFLRLFGCRSSLSPTSTGDSPTVRVSVHGKRCHQAVVLLGNENHENPVDEV.

The protein belongs to the G-protein coupled receptor 1 family.

It is found in the cell membrane. In terms of biological role, not known. Putative receptor. The chain is Probable G-protein coupled receptor AH9.1 from Caenorhabditis elegans.